We begin with the raw amino-acid sequence, 318 residues long: Nodulation protein D 2 (318 aa).

Residues 6–63 (LDLNLLVALDALTTERNLTAAARSINLSQPAMSAAIGRLRDYFRDELFTMNGRELRLT) form the HTH lysR-type domain. Residues 23 to 42 (LTAAARSINLSQPAMSAAIG) constitute a DNA-binding region (H-T-H motif).

This sequence belongs to the LysR transcriptional regulatory family.

Functionally, nodD regulates the expression of the nodABCFE genes which encode other nodulation proteins. NodD is also a negative regulator of its own expression. Binds flavonoids as inducers. The sequence is that of Nodulation protein D 2 (nodD2) from Rhizobium leguminosarum bv. phaseoli.